The primary structure comprises 254 residues: Sec-independent protein translocase protein TatC (254 aa).

A run of 6 helical transmembrane segments spans residues 40 to 60 (IFLS…FVKP), 82 to 104 (FFFV…FILY), 125 to 145 (VVLG…YALI), 172 to 192 (FVLL…IQVV), 210 to 230 (FVIL…DPLT), and 233 to 253 (LLAG…RLLG).

Belongs to the TatC family. Forms a complex with TatA.

The protein localises to the cell inner membrane. Its function is as follows. Part of the twin-arginine translocation (Tat) system that transports large folded proteins containing a characteristic twin-arginine motif in their signal peptide across membranes. The chain is Sec-independent protein translocase protein TatC from Synechocystis sp. (strain ATCC 27184 / PCC 6803 / Kazusa).